A 198-amino-acid polypeptide reads, in one-letter code: dTTP/UTP pyrophosphatase (198 aa).

The active-site Proton acceptor is the D69.

The protein belongs to the Maf family. YhdE subfamily. The cofactor is a divalent metal cation.

It localises to the cytoplasm. It catalyses the reaction dTTP + H2O = dTMP + diphosphate + H(+). It carries out the reaction UTP + H2O = UMP + diphosphate + H(+). Its function is as follows. Nucleoside triphosphate pyrophosphatase that hydrolyzes dTTP and UTP. May have a dual role in cell division arrest and in preventing the incorporation of modified nucleotides into cellular nucleic acids. This chain is dTTP/UTP pyrophosphatase, found in Idiomarina loihiensis (strain ATCC BAA-735 / DSM 15497 / L2-TR).